A 176-amino-acid chain; its full sequence is Ribosome maturation factor RimM (176 aa).

The PRC barrel domain maps to 100 to 173 (EGEFHLLDLV…WLRLTPPPGL (74 aa)).

The protein belongs to the RimM family. As to quaternary structure, binds ribosomal protein uS19.

It localises to the cytoplasm. Functionally, an accessory protein needed during the final step in the assembly of 30S ribosomal subunit, possibly for assembly of the head region. Essential for efficient processing of 16S rRNA. May be needed both before and after RbfA during the maturation of 16S rRNA. It has affinity for free ribosomal 30S subunits but not for 70S ribosomes. The protein is Ribosome maturation factor RimM of Prochlorococcus marinus (strain MIT 9313).